We begin with the raw amino-acid sequence, 603 residues long: UvrABC system protein C (603 aa).

In terms of domain architecture, GIY-YIG spans 17–94; sequence TTSGCYKMLN…IKTHKPDYNV (78 aa). The 36-residue stretch at 199–234 folds into the UVR domain; it reads SEILSQIDIKLKLAVQKEDFETAIKLKEMKSSLIEI.

The protein belongs to the UvrC family. As to quaternary structure, interacts with UvrB in an incision complex.

The protein localises to the cytoplasm. The UvrABC repair system catalyzes the recognition and processing of DNA lesions. UvrC both incises the 5' and 3' sides of the lesion. The N-terminal half is responsible for the 3' incision and the C-terminal half is responsible for the 5' incision. This Borrelia garinii subsp. bavariensis (strain ATCC BAA-2496 / DSM 23469 / PBi) (Borreliella bavariensis) protein is UvrABC system protein C.